The primary structure comprises 335 residues: Spike protein P1 (335 aa).

In terms of assembly, monomer.

The protein resides in the virion. Its function is as follows. Receptor binding protein located at the fivefold vertices. This chain is Spike protein P1 (I), found in Pseudoalteromonas espejiana (Bacteriophage PM2).